The sequence spans 1040 residues: Multidrug resistance protein MdtB (1040 aa).

The next 12 helical transmembrane spans lie at 16-36 (FIMRPVATTLLMVAILLAGII), 347-367 (LMMAITLVVMIIYLFLRNIPA), 369-389 (IIPGVAVPLSLIGTFAVMVFL), 396-416 (LTLMALTIATGFVVDDAIVVI), 440-460 (IGFTIISLTFSLIAVLIPLLF), 472-492 (FAITLAVAILISAVVSLTLTP), 537-557 (WLTLSVALSTLLLSVLLWVFI), 863-883 (LGSTVWLIVAAVVAMYIVLGI), 888-908 (FIHPITILSTLPTAGVGALLA), 911-931 (IAGSELDVIAIIGIILLIGIV), 968-988 (ILMTTLAALLGALPLMLSTGV), and 998-1018 (IGMVGGLIVSQVLTLFTTPVI).

Belongs to the resistance-nodulation-cell division (RND) (TC 2.A.6) family. MdtB subfamily. As to quaternary structure, part of a tripartite efflux system composed of MdtA, MdtB and MdtC. MdtB forms a heteromultimer with MdtC.

The protein localises to the cell inner membrane. In terms of biological role, the MdtABC tripartite complex confers resistance against novobiocin and deoxycholate. In Escherichia coli O157:H7 (strain EC4115 / EHEC), this protein is Multidrug resistance protein MdtB.